Here is an 88-residue protein sequence, read N- to C-terminus: UPF0335 protein M446_5200 (88 aa).

It belongs to the UPF0335 family.

This is UPF0335 protein M446_5200 from Methylobacterium sp. (strain 4-46).